The sequence spans 719 residues: BRCA1-A complex subunit RAP80 (719 aa).

The disordered stretch occupies residues 1 to 30 (MPRRKKKVKEVSESRNLEKKDVETTSSVSV). Residues 1–101 (MPRRKKKVKE…SEQEAREVNS (101 aa)) are necessary for transcriptional repression. Positions 9–23 (KEVSESRNLEKKDVE) are enriched in basic and acidic residues. Lysine 20 participates in a covalent cross-link: Glycyl lysine isopeptide (Lys-Gly) (interchain with G-Cter in SUMO2). Serine 29 is modified (phosphoserine). Lysine 31 is covalently cross-linked (Glycyl lysine isopeptide (Lys-Gly) (interchain with G-Cter in SUMO2)). A disordered region spans residues 43–68 (ISDSDGEEPKEENGLQKTKTKQSNRA). A phosphoserine mark is found at serine 44 and serine 46. An LR motif motif is present at residues 60–78 (TKTKQSNRAKCLAKRKIAQ). Glycyl lysine isopeptide (Lys-Gly) (interchain with G-Cter in SUMO2) cross-links involve residues lysine 75 and lysine 90. The 20-residue stretch at 80 to 99 (TEEEQFALALKMSEQEAREV) folds into the UIM 1 domain. 2 disordered regions span residues 93-152 (EQEA…DSGL) and 164-205 (LFKG…DQSS). Residues 97-103 (REVNSQE) are UIM-linker. A necessary for interaction with NR6A1 N-terminus region spans residues 100 to 200 (NSQEEEEEEL…EEPVSGSSGS (101 aa)). Serine 101 is subject to Phosphoserine. Positions 105 to 124 (EEEELLRKAIAESLNSCRPS) constitute a UIM 2 domain. Polar residues predominate over residues 117 to 130 (SLNSCRPSDASATR). Serine 140 carries the post-translational modification Phosphoserine. Lysine 188 is covalently cross-linked (Glycyl lysine isopeptide (Lys-Gly) (interchain with G-Cter in SUMO2)). Positions 195–205 (SGSSGSWDQSS) are enriched in low complexity. At serine 205 the chain carries Phosphoserine. Lysine 245 is covalently cross-linked (Glycyl lysine isopeptide (Lys-Gly) (interchain with G-Cter in SUMO2)). Positions 270 to 400 (TGGTVNYFWG…EEEPTTSHGQ (131 aa)) are AIR. The tract at residues 320 to 378 (FGEPVLPRPPSLIQNECGQGEQASEKNECISEDMGDEDKEERQESRASDWHSKTKDFQE) is disordered. The segment covering 349-358 (ISEDMGDEDK) has biased composition (acidic residues). The span at 359–378 (EERQESRASDWHSKTKDFQE) shows a compositional bias: basic and acidic residues. Serine 379 carries the phosphoserine modification. Glycyl lysine isopeptide (Lys-Gly) (interchain with G-Cter in SUMO2) cross-links involve residues lysine 382 and lysine 387. Residues 391-422 (EEEPTTSHGQSSQGIVEETSEEGNSVPASQSV) form a disordered region. The interval 400-500 (QSSQGIVEET…EVAISTFSSS (101 aa)) is necessary for interaction with NR6A1 C-terminus. Phosphoserine is present on residues serine 402 and serine 419. The segment covering 412 to 422 (EGNSVPASQSV) has biased composition (polar residues). A Glycyl lysine isopeptide (Lys-Gly) (interchain with G-Cter in SUMO2) cross-link involves residue lysine 428. At serine 466 the chain carries Phosphoserine. A UBZ4-type zinc finger spans residues 502–529 (QVSCPLCDQCFPPTKIERHAMYCNGLME). Zn(2+) contacts are provided by cysteine 505, cysteine 508, histidine 520, and cysteine 524. Residues 505-582 (CPLCDQCFPP…REYQCHVDSC (78 aa)) form a zinc-finger-like region region. Glycyl lysine isopeptide (Lys-Gly) (interchain with G-Cter in SUMO2) cross-links involve residues lysine 544, lysine 559, lysine 562, lysine 587, and lysine 607. The tract at residues 588–668 (ADQGDGPEGS…AGCSREMQSS (81 aa)) is disordered. Residues 614-623 (NPKEKGHSEG) are compositionally biased toward basic and acidic residues. Residue serine 627 is modified to Phosphoserine. Residues 631 to 643 (QSEHKTSDADIKS) are compositionally biased toward basic and acidic residues. Glycyl lysine isopeptide (Lys-Gly) (interchain with G-Cter in SUMO2) cross-links involve residues lysine 635 and lysine 642. Phosphoserine occurs at positions 653 and 677. Glycyl lysine isopeptide (Lys-Gly) (interchain with G-Cter in SUMO2) cross-links involve residues lysine 696 and lysine 697.

Belongs to the RAP80 family. As to quaternary structure, component of the ARISC complex, at least composed of UIMC1/RAP80, ABRAXAS1, BRCC3/BRCC36, BABAM2 and BABAM1/NBA1. Component of the BRCA1-A complex, at least composed of the BRCA1, BARD1, UIMC1/RAP80, ABRAXAS1, BRCC3/BRCC36, BABAM2 and BABAM1/NBA1. In the BRCA1-A complex, interacts directly with ABRAXAS1. Interacts with UBE2I. Interacts with NR6A1. Interacts with ESR1. Interacts with TSP57. Interacts with TRAIP. Post-translationally, sumoylated. Phosphorylated upon DNA damage by ATM or ATR. Expressed in testis, ovary, thymus and heart. Expressed in germ cells of the testis.

It is found in the nucleus. Its function is as follows. Ubiquitin-binding protein. Specifically recognizes and binds 'Lys-63'-linked ubiquitin. Plays a central role in the BRCA1-A complex by specifically binding 'Lys-63'-linked ubiquitinated histones H2A and H2AX at DNA lesions sites, leading to target the BRCA1-BARD1 heterodimer to sites of DNA damage at double-strand breaks (DSBs). The BRCA1-A complex also possesses deubiquitinase activity that specifically removes 'Lys-63'-linked ubiquitin on histones H2A and H2AX. Also weakly binds monoubiquitin but with much less affinity than 'Lys-63'-linked ubiquitin. May interact with monoubiquitinated histones H2A and H2B; the relevance of such results is however unclear in vivo. Does not bind Lys-48'-linked ubiquitin. May indirectly act as a transcriptional repressor by inhibiting the interaction of NR6A1 with the corepressor NCOR1. This is BRCA1-A complex subunit RAP80 (UIMC1) from Homo sapiens (Human).